Consider the following 453-residue polypeptide: Tetrahydroanabasine acetyltransferase (453 aa).

Residues H163 and D388 each act as proton acceptor in the active site.

The protein belongs to the plant acyltransferase family. As to quaternary structure, monomer.

It catalyses the reaction tetrahydroanabasine + acetyl-CoA = ammodendrine + CoA. The protein operates within alkaloid biosynthesis. Its function is as follows. Tetrahydroanabasine acetyltransferase involved in the accumulation of quinolizidine type antinutritional alkaloids (QAs). QAs impart a bitter taste to plants, acting as repellents and toxicants for herbivores and predators, and possess a variety of pharmacological effects, including sedative, anticonvulsant, anti-inflammatory, antiviral, antitumor, antipyretic, anti-hepatitis B, antifibrotic, antiallergic, antidiarrheal, analgesic and antimicrobial activities. Mediates the conversion of tetrahydroanabasine into ammodendrine. The sequence is that of Tetrahydroanabasine acetyltransferase from Lupinus angustifolius (Narrow-leaved blue lupine).